A 217-amino-acid chain; its full sequence is MDYSIARRLMVEQQVIRRGVSDPLVVDAMMRVPRHLFVEEALWSQAYSDFPLPIGEKQTISQPFMVAFMTESLCLHGGEKVLEIGTGSGYQAAVLSQIVSRVYTVERLPGLARRARRILDSVGCRNVNIKLTDGTFGWEEESPFDGIVVTAGSPQIPHHYLEQLAVGGRLVIPVGNRGSQVLKRVVRTGVEKFSEEDLLDCRFVPLVGKYGWHEEGD.

Residue S61 is part of the active site.

Belongs to the methyltransferase superfamily. L-isoaspartyl/D-aspartyl protein methyltransferase family.

The protein localises to the cytoplasm. The catalysed reaction is [protein]-L-isoaspartate + S-adenosyl-L-methionine = [protein]-L-isoaspartate alpha-methyl ester + S-adenosyl-L-homocysteine. Functionally, catalyzes the methyl esterification of L-isoaspartyl residues in peptides and proteins that result from spontaneous decomposition of normal L-aspartyl and L-asparaginyl residues. It plays a role in the repair and/or degradation of damaged proteins. This chain is Protein-L-isoaspartate O-methyltransferase, found in Syntrophotalea carbinolica (strain DSM 2380 / NBRC 103641 / GraBd1) (Pelobacter carbinolicus).